The sequence spans 681 residues: Proline dehydrogenase 1, mitochondrial (681 aa).

The transit peptide at 1-30 (MALLRSLSAQRTAISLVYGRNSSKSSNSVA) directs the protein to the mitochondrion. Over residues 76–87 (STLVQPEVVSSE) the composition is skewed to polar residues. 2 disordered regions span residues 76–113 (STLVQPEVVSSETVKRSMKQESSQEKNPSPAGSPQRDP) and 216–239 (EEAEKREVESSVSSAGDKKEEGSM). Over residues 88–99 (TVKRSMKQESSQ) the composition is skewed to basic and acidic residues.

Belongs to the proline oxidase family. It depends on FAD as a cofactor. In terms of tissue distribution, most abundant in developing nervous system.

Its subcellular location is the mitochondrion matrix. It catalyses the reaction L-proline + a quinone = (S)-1-pyrroline-5-carboxylate + a quinol + H(+). Its pathway is amino-acid degradation; L-proline degradation into L-glutamate; L-glutamate from L-proline: step 1/2. In terms of biological role, converts proline to delta-1-pyrroline-5-carboxylate. Involved in the conversion of proline to glutamate, which functions as a transmitter at neuromuscular junctions. Glutamate deficiency could possibly account for reduced motor activity. The polypeptide is Proline dehydrogenase 1, mitochondrial (slgA) (Drosophila melanogaster (Fruit fly)).